The sequence spans 55 residues: Large ribosomal subunit protein bL33 (55 aa).

This sequence belongs to the bacterial ribosomal protein bL33 family.

This is Large ribosomal subunit protein bL33 from Rhizorhabdus wittichii (strain DSM 6014 / CCUG 31198 / JCM 15750 / NBRC 105917 / EY 4224 / RW1) (Sphingomonas wittichii).